Reading from the N-terminus, the 1059-residue chain is Disks large-associated protein 2 (1059 aa).

Disordered stretches follow at residues 31–56 (GEPE…EEDI) and 244–311 (TKSH…SDST). Residues 244–261 (TKSHSLEGSSKSNINGTK) are compositionally biased toward polar residues. Over residues 262 to 271 (SEGRMDDHHQ) the composition is skewed to basic and acidic residues. Residues 272 to 285 (SHLSKHSKRSKSKE) are compositionally biased toward basic residues. A phosphoserine mark is found at S302, S308, S390, and S456. Disordered regions lie at residues 446 to 466 (GDEE…VALR) and 632 to 669 (VTAQ…NSMD). Residues 632–645 (VTAQSSTESTQDAY) show a composition bias toward polar residues. Phosphoserine occurs at positions 667, 670, 673, and 720. Residues 723–756 (VQDSEFPDHQPYPRSDVETATDSDTESRGLREYH) are disordered. A Phosphothreonine modification is found at T743. Phosphoserine is present on S745. Over residues 747–756 (TESRGLREYH) the composition is skewed to basic and acidic residues. 4 positions are modified to phosphoserine: S776, S811, S983, and S1012. The interval 985 to 1024 (ERKEERKIPPPIPKKPPKGKFPITREKSLDLPDRQRQEAR) is disordered. The span at 1007–1024 (ITREKSLDLPDRQRQEAR) shows a compositional bias: basic and acidic residues.

Belongs to the SAPAP family. As to quaternary structure, interacts with DLG4/PSD-95. As to expression, expressed in various brain areas.

The protein localises to the cell membrane. It localises to the postsynaptic density. It is found in the synapse. Functionally, may play a role in the molecular organization of synapses and neuronal cell signaling. Could be an adapter protein linking ion channel to the subsynaptic cytoskeleton. May induce enrichment of PSD-95/SAP90 at the plasma membrane. This Rattus norvegicus (Rat) protein is Disks large-associated protein 2.